A 93-amino-acid chain; its full sequence is Small ribosomal subunit protein uS19 (93 aa).

The protein belongs to the universal ribosomal protein uS19 family.

Its function is as follows. Protein S19 forms a complex with S13 that binds strongly to the 16S ribosomal RNA. The chain is Small ribosomal subunit protein uS19 from Kocuria rhizophila (strain ATCC 9341 / DSM 348 / NBRC 103217 / DC2201).